Reading from the N-terminus, the 403-residue chain is E2F transcription factor-like E2FE (403 aa).

Residues 34 to 99 (RKQKSLGLLC…RAKNQYTWKG (66 aa)) mediate DNA binding. Residues 128 to 167 (VKGSDDEDDDEESSQPHSSSQTDSSKPGSLPQSSDPSKID) are disordered. A compositionally biased stretch (low complexity) spans 142–152 (QPHSSSQTDSS). Residues 153–163 (KPGSLPQSSDP) are compositionally biased toward polar residues. The DNA-binding element occupies 169 to 250 (RREKSLGLLT…SRKPAFKWLG (82 aa)). The disordered stretch occupies residues 282–319 (VKRSKSSSSSQENATERRLKMKKHSTPESSYNKSFDVH).

The protein belongs to the E2F/DP family. In terms of tissue distribution, expressed exclusively in mitotically dividing cells. Highly expressed in young leaves and mature flowers. Lower expression in young stalk and in young and mature flowers.

It localises to the nucleus. Inhibitor of E2F-dependent activation of gene expression. Binds specifically the E2 recognition site without interacting with DP proteins and prevents transcription activation by E2F/DP heterodimers. Controls the timing of endocycle onset and inhibits endoreduplication. This is E2F transcription factor-like E2FE (E2FE) from Arabidopsis thaliana (Mouse-ear cress).